We begin with the raw amino-acid sequence, 521 residues long: MDFSSNVAAQLNAGTILPEGIVIVTLLLVLIVDLIGGRKVALALPYLAIAGLLVSVGLLVTSWSMADPIGFIGAFNGDNLSIIFRAIIALSTVVTILMSVRYVQQTGTSLAEFIAILLTATLGGMFLSAANELVMVFISLEMLSISSYLMTGYMKRDPRSNEAALKYLLIGASSSAIFLYGLSLLYGLSGGETQLVLIAEKLVNADTVGQSLGLAIALVFVIAGIAFKISAVPFHQWTPDVYEGSPTPVVAFLSVGSKAAGFAVAIRLLVTAFGGITDEWHVIFTALAVLSMVLGNVVALAQTSMKRMLAYSSIGQAGFVMIGLVAGSEDGYASMVFYMLIYLFMNLGAFSCIILFTLRTGSDQISDYAGLYHKDPLLTLGLSICLLSLGGIPPLAGFFGKIYIFWAGWQSGLYGLVLLGLVTSVVSIYYYIRVVKMMVVKEPQEMSEVIKNYPAIKWNLPGMRPLQVGIVATLVATSLAGILANPLFNLATDSVVSTKMLQTALQQTGETPAIAISHDLP.

Transmembrane regions (helical) follow at residues 16–36 (ILPE…DLIG), 40–60 (VALA…GLLV), 80–100 (LSII…LMSV), 110–130 (LAEF…LSAA), 133–153 (LVMV…MTGY), 168–188 (LLIG…LYGL), 212–232 (LGLA…ISAV), 246–266 (PTPV…AVAI), 280–300 (WHVI…VVAL), 308–328 (MLAY…VAGS), 336–356 (VFYM…IILF), 380–400 (LGLS…GFFG), 402–422 (IYIF…LGLV), and 468–488 (VGIV…NPLF).

The protein belongs to the complex I subunit 2 family. NDH-1 can be composed of about 15 different subunits; different subcomplexes with different compositions have been identified which probably have different functions.

It localises to the cellular thylakoid membrane. It carries out the reaction a plastoquinone + NADH + (n+1) H(+)(in) = a plastoquinol + NAD(+) + n H(+)(out). It catalyses the reaction a plastoquinone + NADPH + (n+1) H(+)(in) = a plastoquinol + NADP(+) + n H(+)(out). Its function is as follows. NDH-1 shuttles electrons from an unknown electron donor, via FMN and iron-sulfur (Fe-S) centers, to quinones in the respiratory and/or the photosynthetic chain. The immediate electron acceptor for the enzyme in this species is believed to be plastoquinone. Couples the redox reaction to proton translocation, and thus conserves the redox energy in a proton gradient. Cyanobacterial NDH-1 also plays a role in inorganic carbon-concentration. The protein is NAD(P)H-quinone oxidoreductase subunit 2 of Synechocystis sp. (strain ATCC 27184 / PCC 6803 / Kazusa).